The following is a 423-amino-acid chain: Enolase (423 aa).

Q163 lines the (2R)-2-phosphoglycerate pocket. E205 functions as the Proton donor in the catalytic mechanism. D242, E285, and D312 together coordinate Mg(2+). Residues K337, R366, S367, and K388 each contribute to the (2R)-2-phosphoglycerate site. Residue K337 is the Proton acceptor of the active site.

It belongs to the enolase family. Mg(2+) is required as a cofactor.

Its subcellular location is the cytoplasm. The protein localises to the secreted. It is found in the cell surface. It catalyses the reaction (2R)-2-phosphoglycerate = phosphoenolpyruvate + H2O. It functions in the pathway carbohydrate degradation; glycolysis; pyruvate from D-glyceraldehyde 3-phosphate: step 4/5. In terms of biological role, catalyzes the reversible conversion of 2-phosphoglycerate (2-PG) into phosphoenolpyruvate (PEP). It is essential for the degradation of carbohydrates via glycolysis. The polypeptide is Enolase (Desulforapulum autotrophicum (strain ATCC 43914 / DSM 3382 / VKM B-1955 / HRM2) (Desulfobacterium autotrophicum)).